The sequence spans 335 residues: MSVGRIRYDWHKAEIRAVYDTPLLELIYQAASVHRQFHNPKQIQVCKLISIKTGACPEDCSYCAQSSRYQTEVKPQALLDKQTVVEIAQNAKQKGVSRVCMGAAWREVRDNSQFDRVLEMVKDVTDMGLEVCCTLGMLTSEQAKKLETAGLYAYNHNLDTSSDYYSTIITTRTYGDRLNTIENVRQTNVTVCSGGILGLGESIDDRVAMLQTLATLNPHPESVPINILSQVEGTPLEDQPDVPVWDVVRMIATARIVMPTSDVRLSAGRARLSQVEQAFCFMAGANSIFSSDDNKMLTVTTPCPDYDADQEMLNLLGLEMRPPSQRPQPVVMGNS.

The 229-residue stretch at Lys41–Arg269 folds into the Radical SAM core domain. Positions 56, 60, and 63 each coordinate [4Fe-4S] cluster. Residues Cys100, Cys132, Cys192, and Arg264 each coordinate [2Fe-2S] cluster.

This sequence belongs to the radical SAM superfamily. Biotin synthase family. As to quaternary structure, homodimer. Requires [4Fe-4S] cluster as cofactor. The cofactor is [2Fe-2S] cluster.

The catalysed reaction is (4R,5S)-dethiobiotin + (sulfur carrier)-SH + 2 reduced [2Fe-2S]-[ferredoxin] + 2 S-adenosyl-L-methionine = (sulfur carrier)-H + biotin + 2 5'-deoxyadenosine + 2 L-methionine + 2 oxidized [2Fe-2S]-[ferredoxin]. The protein operates within cofactor biosynthesis; biotin biosynthesis; biotin from 7,8-diaminononanoate: step 2/2. In terms of biological role, catalyzes the conversion of dethiobiotin (DTB) to biotin by the insertion of a sulfur atom into dethiobiotin via a radical-based mechanism. The polypeptide is Biotin synthase (Nostoc sp. (strain PCC 7120 / SAG 25.82 / UTEX 2576)).